Consider the following 391-residue polypeptide: Formate-dependent phosphoribosylglycinamide formyltransferase (391 aa).

Residues 20–21 (EL) and Glu80 each bind N(1)-(5-phospho-beta-D-ribosyl)glycinamide. Residues Arg112, Lys153, 158 to 163 (SSGKGQ), 193 to 196 (EGFI), and Glu201 each bind ATP. The ATP-grasp domain maps to 117-306 (RLAAEDLQIP…EFALHVRAFL (190 aa)). Glu265 and Glu277 together coordinate Mg(2+). Residues Asp284, Lys354, and 361–362 (RR) contribute to the N(1)-(5-phospho-beta-D-ribosyl)glycinamide site.

This sequence belongs to the PurK/PurT family. Homodimer.

It catalyses the reaction N(1)-(5-phospho-beta-D-ribosyl)glycinamide + formate + ATP = N(2)-formyl-N(1)-(5-phospho-beta-D-ribosyl)glycinamide + ADP + phosphate + H(+). The protein operates within purine metabolism; IMP biosynthesis via de novo pathway; N(2)-formyl-N(1)-(5-phospho-D-ribosyl)glycinamide from N(1)-(5-phospho-D-ribosyl)glycinamide (formate route): step 1/1. Functionally, involved in the de novo purine biosynthesis. Catalyzes the transfer of formate to 5-phospho-ribosyl-glycinamide (GAR), producing 5-phospho-ribosyl-N-formylglycinamide (FGAR). Formate is provided by PurU via hydrolysis of 10-formyl-tetrahydrofolate. In Photobacterium profundum (strain SS9), this protein is Formate-dependent phosphoribosylglycinamide formyltransferase.